The primary structure comprises 208 residues: Protein-L-isoaspartate O-methyltransferase (208 aa).

Ser59 is an active-site residue.

Belongs to the methyltransferase superfamily. L-isoaspartyl/D-aspartyl protein methyltransferase family.

It localises to the cytoplasm. The catalysed reaction is [protein]-L-isoaspartate + S-adenosyl-L-methionine = [protein]-L-isoaspartate alpha-methyl ester + S-adenosyl-L-homocysteine. Catalyzes the methyl esterification of L-isoaspartyl residues in peptides and proteins that result from spontaneous decomposition of normal L-aspartyl and L-asparaginyl residues. It plays a role in the repair and/or degradation of damaged proteins. This is Protein-L-isoaspartate O-methyltransferase from Escherichia fergusonii (strain ATCC 35469 / DSM 13698 / CCUG 18766 / IAM 14443 / JCM 21226 / LMG 7866 / NBRC 102419 / NCTC 12128 / CDC 0568-73).